Reading from the N-terminus, the 2517-residue chain is Cullin-9 (2517 aa).

Residue lysine 87 forms a Glycyl lysine isopeptide (Lys-Gly) (interchain with G-Cter in ubiquitin) linkage. The span at 276-288 (SPELGAGDQSSPC) shows a compositional bias: polar residues. A disordered region spans residues 276-296 (SPELGAGDQSSPCATREKSRG). The 74-residue stretch at 366–439 (RSEFSSRSGY…HWHMLEILGP (74 aa)) folds into the CPH domain. A compositionally biased stretch (low complexity) spans 576–589 (SNEPSSSSTSRNHS). Positions 576-639 (SNEPSSSSTS…TETPMAQSDS (64 aa)) are disordered. Over residues 593-609 (DPEEESKSEASFSEEET) the composition is skewed to acidic residues. Residues 610-630 (ESLKAKAEAPKTEAEPTKTRT) show a composition bias toward basic and acidic residues. Position 976 is a phosphoserine (serine 976). The 180-residue stretch at 1143 to 1322 (PINIPFFDVF…RTCLFYTIRA (180 aa)) folds into the DOC domain. An ATP-binding site is contributed by 1363–1370 (AAQALGKT). Disordered regions lie at residues 1432 to 1466 (VEPPPGPSPEPSTRPFSKNSKGRDRSPAPSPVLPS) and 1664 to 1685 (DEEEKRLEEEEEEEEEEEAEKE). Over residues 1433–1443 (EPPPGPSPEPS) the composition is skewed to pro residues. At serine 1457 the chain carries Phosphoserine. A coiled-coil region spans residues 1649 to 1691 (LFQLQRLDKLFLEQEDEEEKRLEEEEEEEEEEEAEKELFIEDP). Acidic residues predominate over residues 1664-1683 (DEEEKRLEEEEEEEEEEEAE). Residue lysine 1881 forms a Glycyl lysine isopeptide (Lys-Gly) (interchain with G-Cter in NEDD8) linkage. A TRIAD supradomain region spans residues 2066–2283 (RPDHCPVCVS…KDYYNCSAMV (218 aa)). 18 residues coordinate Zn(2+): cysteine 2070, cysteine 2073, cysteine 2088, histidine 2090, cysteine 2093, cysteine 2096, cysteine 2115, cysteine 2120, cysteine 2160, cysteine 2166, cysteine 2181, cysteine 2184, cysteine 2189, cysteine 2192, histidine 2198, cysteine 2203, cysteine 2236, and cysteine 2239. The segment at 2070-2120 (CPVCVSPLGCDDDLPSLCCMHYCCKSCWNEYLTTRIEQNLVLNCTCPIADC) adopts an RING-type 1 zinc-finger fold. An IBR-type zinc finger spans residues 2140 to 2203 (SKYEKALLRG…FPEAHYPASC (64 aa)). The RING-type 2; atypical zinc-finger motif lies at 2236–2265 (CPSCQAPIEKNEGCLHMTCAKCNHGFCWRC). Residue cysteine 2249 is part of the active site. Positions 2254, 2257, 2262, 2265, 2273, and 2279 each coordinate Zn(2+). A coiled-coil region spans residues 2365–2385 (VEQQTENLELHTNALQILLEE). A Phosphoserine modification is found at serine 2436. The segment at 2442 to 2517 (WEAKGPNMPG…EEEDEDEAYD (76 aa)) is disordered. 2 stretches are compositionally biased toward acidic residues: residues 2461-2499 (EAEEEEEDDEDDVPEWQQDEFDEELDNDSFSYDESENLD) and 2506-2517 (GDEEEDEDEAYD).

It belongs to the cullin family. As to quaternary structure, component of the Cul9-RING complex consisting of CUL9 and RBX1; the CUL9-RBX1 complex is a heterododecamer composed of six CUL9 and six RBX1 protomers. Interacts (via C-terminal TRIAD/RBR supradomain) with E2 ubiquitin-conjugating enzyme UBE2L3. Interacts with CUL7; the interaction with the CUL7 component of the 3M complex leads to inhibition of CUL9 activity. The CUL7-CUL9 heterodimer seems to interact specifically with TP53, likely via the CPH domain. Forms a complex with p53/TP53 in the cytoplasm of unstressed cells. Interacts with UBCH7 and UBCH8. Autoubiquitinated by the CUL9-RBX1 complex at Lys-87. Post-translationally, neddylated. Neddylation is mediated by E1 enzyme UBA3-NAE1 complex and E2 enzyme UBE2F. Structural rearrangment of the C-terminal TRIAD/RBR supradomain may play a role in neddylation and deneddylation. Ubiquitously expressed in all tissues with highest expression in testis brain and kidney.

The protein resides in the cytoplasm. In terms of biological role, core component of a Cul9-RING ubiquitin-protein ligase complex composed of CUL9 and RBX1. The CUL9-RBX1 complex mediates ubiquitination and subsequent degradation of BIRC5 and is required to maintain microtubule dynamics and genome integrity. Acts downstream of the 3M complex, which inhibits the ubiquitination of BIRC5. The CUL9-RBX1 complex also mediates mono-ubiquitination of p53/TP53. Acts as a cytoplasmic anchor protein in p53/TP53-associated protein complex. Regulates the subcellular localization of p53/TP53 and its subsequent function. Ubiquitinates apurinic/apyrimidinic endodeoxyribonuclease APEX2. Ubiquitination by the CUL9-RBX1 complex is predominantly mediated by E2 ubiquitin-conjugating enzymes UBE2L3 and UBE2D2. In Homo sapiens (Human), this protein is Cullin-9 (CUL9).